The sequence spans 200 residues: Alpha-amylase/subtilisin inhibitor (200 aa).

A signal peptide spans Met1–Ala22. 2 disulfide bridges follow: Cys63-Cys112 and Cys162-Cys166.

This sequence belongs to the protease inhibitor I3 (leguminous Kunitz-type inhibitor) family.

Its function is as follows. This protein inhibits independently subtilisin and T.castaneum alpha-amylase but not barley alpha-amylase. The sequence is that of Alpha-amylase/subtilisin inhibitor (RASI) from Oryza sativa subsp. japonica (Rice).